The chain runs to 440 residues: 3-phosphoshikimate 1-carboxyvinyltransferase (440 aa).

Positions 26, 27, and 31 each coordinate 3-phosphoshikimate. Residue lysine 26 coordinates phosphoenolpyruvate. Glycine 99 and arginine 127 together coordinate phosphoenolpyruvate. 3-phosphoshikimate-binding residues include serine 172, glutamine 174, aspartate 320, and lysine 347. Glutamine 174 contacts phosphoenolpyruvate. Residue aspartate 320 is the Proton acceptor of the active site. Residues arginine 351 and arginine 392 each coordinate phosphoenolpyruvate.

This sequence belongs to the EPSP synthase family. In terms of assembly, monomer.

The protein localises to the cytoplasm. It catalyses the reaction 3-phosphoshikimate + phosphoenolpyruvate = 5-O-(1-carboxyvinyl)-3-phosphoshikimate + phosphate. The protein operates within metabolic intermediate biosynthesis; chorismate biosynthesis; chorismate from D-erythrose 4-phosphate and phosphoenolpyruvate: step 6/7. Its function is as follows. Catalyzes the transfer of the enolpyruvyl moiety of phosphoenolpyruvate (PEP) to the 5-hydroxyl of shikimate-3-phosphate (S3P) to produce enolpyruvyl shikimate-3-phosphate and inorganic phosphate. The protein is 3-phosphoshikimate 1-carboxyvinyltransferase of Xanthomonas axonopodis pv. citri (strain 306).